A 605-amino-acid polypeptide reads, in one-letter code: MELALVGNPSNGVAKPSCNSVGSLPVVSSNAVIHPPVTSAAGATLGRHLARRLVQIGATDVFAVPGDFNLTLLDYLIAEPGLKLIGCCNELNAGYAADGYARARGVGACAVTFTVGGLSVLNAIAGAYSENLPVICIVGGPNSNDYGTNRILHHTIGLPDFSQELRCFQTITCYQAVINNLDDAHEQIDTAIATALRESKPVYISVGCNLAGLSHPTFSREPVPLFISPRLSNKANLEYAVEAAADFLNKAVKPVMVGGPKIRVAKAKKAFAGIAESSGYPIAVMPSAKGLVPEHHPRFIGTYWGAVSTTFCAEIVESADAYLFAGPIFNDYSSVGYSLLLKREKAVIVQPDRVVVGNGPAFGCILMTEFLDALAKRLDRNTTAYDNYRRIFIPDREPPNGQPDEPLRVNILFKHIKEMLSGDTAVIAETGDSWFNCQKLRLPEGCGYEFQMQYGSIGWSVGATLGYAQAAKDKRVISCIGDGSFQMTAQDVSTMLRCGQKSIIFLINNGGYTIEVEIHDGPYNVIKNWDYTGLIDAIHNSDGNCWTKKVRTEEELIEAIATATGAKKDCLCFIEIIVHKDDTSKELLEWGSRVSAANSRPPNPQ.

Positions 67 and 154 each coordinate substrate. The thiamine pyrophosphate binding stretch occupies residues 432–514; sequence DSWFNCQKLR…FLINNGGYTI (83 aa). The Mg(2+) site is built by aspartate 482, asparagine 509, and glycine 511. Glutamate 515 is a substrate binding site.

It belongs to the TPP enzyme family. Homotetramer. Requires a metal cation as cofactor. Thiamine diphosphate is required as a cofactor.

The enzyme catalyses a 2-oxocarboxylate + H(+) = an aldehyde + CO2. This is Pyruvate decarboxylase 1 (PDC1) from Oryza sativa subsp. indica (Rice).